Here is a 767-residue protein sequence, read N- to C-terminus: Glucoamylase S1 (767 aa).

An N-terminal signal peptide occupies residues 1–21; that stretch reads MQRPFLLAYLVLSLLFNSALG. 2 disordered regions span residues 29 to 83 and 125 to 149; these read RGSS…ETTI and TTTV…PTTP. Low complexity predominate over residues 30 to 48; sequence GSSSSNITSSGPSSTPFSS. N-linked (GlcNAc...) asparagine glycosylation occurs at asparagine 35. Positions 49 to 66 are enriched in polar residues; that stretch reads ATESFSTGTTVTPSSSKY. 2 stretches are compositionally biased toward low complexity: residues 71–83 and 131–149; these read TETS…ETTI and STSP…PTTP. Asparagine 308, asparagine 322, asparagine 414, asparagine 423, and asparagine 434 each carry an N-linked (GlcNAc...) asparagine glycan. The interval 348 to 691 is h subunit; sequence VSIERIFENI…ASTTLYQLIY (344 aa). Tryptophan 455 serves as a coordination point for substrate. Asparagine 513 is a glycosylation site (N-linked (GlcNAc...) asparagine). The Proton acceptor role is filled by aspartate 518. Glutamate 521 (proton donor) is an active-site residue. 5 N-linked (GlcNAc...) asparagine glycosylation sites follow: asparagine 546, asparagine 645, asparagine 650, asparagine 720, and asparagine 741. The segment at 692–767 is y subunit; that stretch reads RHISEQHDLV…LKATWEQTGN (76 aa).

The protein belongs to the glycosyl hydrolase 15 family.

The catalysed reaction is Hydrolysis of terminal (1-&gt;4)-linked alpha-D-glucose residues successively from non-reducing ends of the chains with release of beta-D-glucose.. In Saccharomyces cerevisiae (Baker's yeast), this protein is Glucoamylase S1 (STA1).